The chain runs to 384 residues: 2-isopropylmalate synthase 2 (384 aa).

Positions 9–260 (VYIVDTTLRD…DLGIDTSRFR (252 aa)) constitute a Pyruvate carboxyltransferase domain. Mn(2+) contacts are provided by Asp-18, His-198, His-200, and Asn-234.

It belongs to the alpha-IPM synthase/homocitrate synthase family. LeuA type 1 subfamily. As to quaternary structure, homodimer. The cofactor is Mn(2+).

The protein localises to the cytoplasm. It carries out the reaction 3-methyl-2-oxobutanoate + acetyl-CoA + H2O = (2S)-2-isopropylmalate + CoA + H(+). Its pathway is amino-acid biosynthesis; L-leucine biosynthesis; L-leucine from 3-methyl-2-oxobutanoate: step 1/4. Functionally, catalyzes the condensation of the acetyl group of acetyl-CoA with 3-methyl-2-oxobutanoate (2-ketoisovalerate) to form 3-carboxy-3-hydroxy-4-methylpentanoate (2-isopropylmalate). The chain is 2-isopropylmalate synthase 2 from Caldanaerobacter subterraneus subsp. tengcongensis (strain DSM 15242 / JCM 11007 / NBRC 100824 / MB4) (Thermoanaerobacter tengcongensis).